The chain runs to 461 residues: Integrator complex subunit 12 (461 aa).

The interval Gly-42–Val-131 is disordered. Lys-68 participates in a covalent cross-link: Glycyl lysine isopeptide (Lys-Gly) (interchain with G-Cter in SUMO2). Residues Thr-88–Thr-124 are compositionally biased toward basic and acidic residues. Ser-127 is modified (phosphoserine). A PHD-type zinc finger spans residues Gly-158–Gln-214. Residue Lys-253 forms a Glycyl lysine isopeptide (Lys-Gly) (interchain with G-Cter in SUMO2) linkage. Positions Ala-302–Lys-328 are enriched in polar residues. Residues Ala-302–Ala-443 are disordered. 2 stretches are compositionally biased toward low complexity: residues Gly-348–Val-357 and Val-381–Ser-436.

This sequence belongs to the Integrator subunit 12 family. Component of the Integrator complex, composed of core subunits INTS1, INTS2, INTS3, INTS4, INTS5, INTS6, INTS7, INTS8, INTS9/RC74, INTS10, INTS11/CPSF3L, INTS12, INTS13, INTS14 and INTS15. The core complex associates with protein phosphatase 2A subunits PPP2CA and PPP2R1A, to form the Integrator-PP2A (INTAC) complex. In terms of processing, dephosphorylated at Ser-127 by the PNUTS-PP1 complex, promoting RNA polymerase II transcription pause-release.

Its subcellular location is the nucleus. Its function is as follows. Component of the integrator complex, a multiprotein complex that terminates RNA polymerase II (Pol II) transcription in the promoter-proximal region of genes. The integrator complex provides a quality checkpoint during transcription elongation by driving premature transcription termination of transcripts that are unfavorably configured for transcriptional elongation: the complex terminates transcription by (1) catalyzing dephosphorylation of the C-terminal domain (CTD) of Pol II subunit POLR2A/RPB1 and SUPT5H/SPT5, (2) degrading the exiting nascent RNA transcript via endonuclease activity and (3) promoting the release of Pol II from bound DNA. The integrator complex is also involved in terminating the synthesis of non-coding Pol II transcripts, such as enhancer RNAs (eRNAs), small nuclear RNAs (snRNAs), telomerase RNAs and long non-coding RNAs (lncRNAs). Mediates recruitment of cytoplasmic dynein to the nuclear envelope, probably as component of the integrator complex. The sequence is that of Integrator complex subunit 12 (Ints12) from Mus musculus (Mouse).